The primary structure comprises 135 residues: Ribosome-binding factor A (135 aa).

The protein belongs to the RbfA family. As to quaternary structure, monomer. Binds 30S ribosomal subunits, but not 50S ribosomal subunits or 70S ribosomes.

The protein localises to the cytoplasm. One of several proteins that assist in the late maturation steps of the functional core of the 30S ribosomal subunit. Associates with free 30S ribosomal subunits (but not with 30S subunits that are part of 70S ribosomes or polysomes). Required for efficient processing of 16S rRNA. May interact with the 5'-terminal helix region of 16S rRNA. The protein is Ribosome-binding factor A of Rhodopseudomonas palustris (strain HaA2).